The sequence spans 382 residues: Lipid-A-disaccharide synthase (382 aa).

The protein belongs to the LpxB family.

It carries out the reaction 2-N,3-O-bis[(3R)-3-hydroxytetradecanoyl]-alpha-D-glucosaminyl 1-phosphate + UDP-2-N,3-O-bis[(3R)-3-hydroxytetradecanoyl]-alpha-D-glucosamine = lipid A disaccharide (E. coli) + UDP + H(+). It catalyses the reaction a lipid X + a UDP-2-N,3-O-bis[(3R)-3-hydroxyacyl]-alpha-D-glucosamine = a lipid A disaccharide + UDP + H(+). Its pathway is glycolipid biosynthesis; lipid IV(A) biosynthesis; lipid IV(A) from (3R)-3-hydroxytetradecanoyl-[acyl-carrier-protein] and UDP-N-acetyl-alpha-D-glucosamine: step 5/6. Condensation of UDP-2,3-diacylglucosamine and 2,3-diacylglucosamine-1-phosphate to form lipid A disaccharide, a precursor of lipid A, a phosphorylated glycolipid that anchors the lipopolysaccharide to the outer membrane of the cell. The sequence is that of Lipid-A-disaccharide synthase from Escherichia coli (strain ATCC 8739 / DSM 1576 / NBRC 3972 / NCIMB 8545 / WDCM 00012 / Crooks).